We begin with the raw amino-acid sequence, 178 residues long: ATP synthase subunit delta (178 aa).

This sequence belongs to the ATPase delta chain family. F-type ATPases have 2 components, F(1) - the catalytic core - and F(0) - the membrane proton channel. F(1) has five subunits: alpha(3), beta(3), gamma(1), delta(1), epsilon(1). F(0) has three main subunits: a(1), b(2) and c(10-14). The alpha and beta chains form an alternating ring which encloses part of the gamma chain. F(1) is attached to F(0) by a central stalk formed by the gamma and epsilon chains, while a peripheral stalk is formed by the delta and b chains.

The protein localises to the cell inner membrane. Its function is as follows. F(1)F(0) ATP synthase produces ATP from ADP in the presence of a proton or sodium gradient. F-type ATPases consist of two structural domains, F(1) containing the extramembraneous catalytic core and F(0) containing the membrane proton channel, linked together by a central stalk and a peripheral stalk. During catalysis, ATP synthesis in the catalytic domain of F(1) is coupled via a rotary mechanism of the central stalk subunits to proton translocation. In terms of biological role, this protein is part of the stalk that links CF(0) to CF(1). It either transmits conformational changes from CF(0) to CF(1) or is implicated in proton conduction. In Nitrosococcus oceani (strain ATCC 19707 / BCRC 17464 / JCM 30415 / NCIMB 11848 / C-107), this protein is ATP synthase subunit delta.